A 678-amino-acid chain; its full sequence is DNA ligase (678 aa).

NAD(+) is bound by residues 47-51 (DSDYD), 96-97 (SL), and Glu-122. The active-site N6-AMP-lysine intermediate is Lys-124. Residues Arg-145, Glu-182, Lys-300, and Lys-324 each contribute to the NAD(+) site. Zn(2+) contacts are provided by Cys-418, Cys-421, Cys-436, and Cys-442. One can recognise a BRCT domain in the interval 602 to 678 (AYNESFTGKT…ILEDNLKDLL (77 aa)).

The protein belongs to the NAD-dependent DNA ligase family. LigA subfamily. Mg(2+) is required as a cofactor. The cofactor is Mn(2+).

The catalysed reaction is NAD(+) + (deoxyribonucleotide)n-3'-hydroxyl + 5'-phospho-(deoxyribonucleotide)m = (deoxyribonucleotide)n+m + AMP + beta-nicotinamide D-nucleotide.. Its function is as follows. DNA ligase that catalyzes the formation of phosphodiester linkages between 5'-phosphoryl and 3'-hydroxyl groups in double-stranded DNA using NAD as a coenzyme and as the energy source for the reaction. It is essential for DNA replication and repair of damaged DNA. This chain is DNA ligase, found in Francisella tularensis subsp. tularensis (strain SCHU S4 / Schu 4).